We begin with the raw amino-acid sequence, 696 residues long: DNA-directed RNA polymerase subunit beta N-terminal section (696 aa).

The protein belongs to the RNA polymerase beta chain family. In terms of assembly, in plastids the minimal PEP RNA polymerase catalytic core is composed of four subunits: alpha, beta, beta', and beta''. When a (nuclear-encoded) sigma factor is associated with the core the holoenzyme is formed, which can initiate transcription.

Its subcellular location is the plastid. It is found in the chloroplast. The enzyme catalyses RNA(n) + a ribonucleoside 5'-triphosphate = RNA(n+1) + diphosphate. Functionally, DNA-dependent RNA polymerase catalyzes the transcription of DNA into RNA using the four ribonucleoside triphosphates as substrates. This is DNA-directed RNA polymerase subunit beta N-terminal section (rpoB1) from Stigeoclonium helveticum (Green alga).